The sequence spans 216 residues: Adenylate kinase (216 aa).

10–15 (GAGKGT) is a binding site for ATP. The interval 30–59 (STGDMFRAAMKAETEMGLQAKSFIDKGALV) is NMP. AMP-binding positions include T31, R36, 57–59 (ALV), 85–88 (GFPR), and Q92. Residues 126-163 (GRRICKECGATYHLEFNAPAKADVCDKCGGELYQRSDD) form an LID region. An ATP-binding site is contributed by R127. The Zn(2+) site is built by C130 and C133. Residue 136-137 (TY) coordinates ATP. Zn(2+) is bound by residues C150 and C153. R160 and R171 together coordinate AMP. ATP is bound at residue Q199.

Belongs to the adenylate kinase family. Monomer.

The protein localises to the cytoplasm. It catalyses the reaction AMP + ATP = 2 ADP. The protein operates within purine metabolism; AMP biosynthesis via salvage pathway; AMP from ADP: step 1/1. Functionally, catalyzes the reversible transfer of the terminal phosphate group between ATP and AMP. Plays an important role in cellular energy homeostasis and in adenine nucleotide metabolism. The polypeptide is Adenylate kinase (Bacillus anthracis (strain A0248)).